Here is a 958-residue protein sequence, read N- to C-terminus: Glycine dehydrogenase (decarboxylating) (958 aa).

N6-(pyridoxal phosphate)lysine is present on lysine 705.

The protein belongs to the GcvP family. In terms of assembly, the glycine cleavage system is composed of four proteins: P, T, L and H. The cofactor is pyridoxal 5'-phosphate.

It carries out the reaction N(6)-[(R)-lipoyl]-L-lysyl-[glycine-cleavage complex H protein] + glycine + H(+) = N(6)-[(R)-S(8)-aminomethyldihydrolipoyl]-L-lysyl-[glycine-cleavage complex H protein] + CO2. Functionally, the glycine cleavage system catalyzes the degradation of glycine. The P protein binds the alpha-amino group of glycine through its pyridoxal phosphate cofactor; CO(2) is released and the remaining methylamine moiety is then transferred to the lipoamide cofactor of the H protein. This chain is Glycine dehydrogenase (decarboxylating), found in Synechococcus sp. (strain CC9902).